Here is a 271-residue protein sequence, read N- to C-terminus: 5'-AMP-activated protein kinase subunit beta-2 (271 aa).

The tract at residues 1–46 (MGNTTSERVSGERHGAKAARAEGGGHGPGKEHKIMVGSTDDPSVFS) is disordered. Residue serine 38 is modified to Phosphoserine; by ULK1. Residue threonine 39 is modified to Phosphothreonine; by ULK1. At serine 68 the chain carries Phosphoserine; by ULK1. Serine 94 and serine 107 each carry phosphoserine. Threonine 147 is subject to Phosphothreonine. Phosphoserine occurs at positions 157, 169, 173, and 183.

It belongs to the 5'-AMP-activated protein kinase beta subunit family. As to quaternary structure, AMPK is a heterotrimer of an alpha catalytic subunit (PRKAA1 or PRKAA2), a beta (PRKAB1 or PRKAB2) and a gamma non-catalytic subunits (PRKAG1, PRKAG2 or PRKAG3). Post-translationally, phosphorylated when associated with the catalytic subunit (PRKAA1 or PRKAA2). Phosphorylated by ULK1 and ULK2; leading to negatively regulate AMPK activity and suggesting the existence of a regulatory feedback loop between ULK1, ULK2 and AMPK.

Functionally, non-catalytic subunit of AMP-activated protein kinase (AMPK), an energy sensor protein kinase that plays a key role in regulating cellular energy metabolism. In response to reduction of intracellular ATP levels, AMPK activates energy-producing pathways and inhibits energy-consuming processes: inhibits protein, carbohydrate and lipid biosynthesis, as well as cell growth and proliferation. AMPK acts via direct phosphorylation of metabolic enzymes, and by longer-term effects via phosphorylation of transcription regulators. Also acts as a regulator of cellular polarity by remodeling the actin cytoskeleton; probably by indirectly activating myosin. Beta non-catalytic subunit acts as a scaffold on which the AMPK complex assembles, via its C-terminus that bridges alpha (PRKAA1 or PRKAA2) and gamma subunits (PRKAG1, PRKAG2 or PRKAG3). In Mus musculus (Mouse), this protein is 5'-AMP-activated protein kinase subunit beta-2 (Prkab2).